Here is a 601-residue protein sequence, read N- to C-terminus: NAD-dependent malic enzyme 59 kDa isoform, mitochondrial (601 aa).

The N-terminal 18 residues, 1 to 18, are a transit peptide targeting the mitochondrion; it reads MWRVARSAASTFRRTRRL. Tyr-129 (proton donor) is an active-site residue. An NAD(+)-binding site is contributed by Arg-182. Lys-200 functions as the Proton acceptor in the catalytic mechanism. The a divalent metal cation site is built by Glu-271, Asp-272, and Asp-295. Residues Asp-295 and Asn-444 each coordinate NAD(+).

This sequence belongs to the malic enzymes family. Heterodimer of two related subunits. Mg(2+) serves as cofactor. The cofactor is Mn(2+).

The protein resides in the mitochondrion matrix. The catalysed reaction is (S)-malate + NAD(+) = pyruvate + CO2 + NADH. The polypeptide is NAD-dependent malic enzyme 59 kDa isoform, mitochondrial (Solanum tuberosum (Potato)).